We begin with the raw amino-acid sequence, 309 residues long: Protein FdhE (309 aa).

The protein belongs to the FdhE family.

It is found in the cytoplasm. Functionally, necessary for formate dehydrogenase activity. The polypeptide is Protein FdhE (Shigella boydii serotype 18 (strain CDC 3083-94 / BS512)).